The sequence spans 320 residues: MQITFLGTSSGVPTRSRNVSSVALRLPQRAEVWLFDCGEATQHQILRSDVRLSQIRRIFITHMHGDHIFGLMGLLASCGLAGNVSRMDIYGPPGLNKYLEACQRYSQTHFSYPIRVHTVQPGVIYEDEEFTVSCTALHHRVTAFGYRVSEKDRPGRFDVQQAVALGIPSGPLYGQLKRGEQVTLADGRVIHGQQLCAPPELGRKLAYCTDTIYCEGAVELAQDVDVLIHEATFAHQDADMAYQRLHSTSTMAAQVALAAAAKRLFLTHFSPRYAPGNDLQIDNLLEEARAIFAPTELAYDFLTYELPRHLEPERQTLSVG.

7 residues coordinate Zn(2+): His-62, His-64, Asp-66, His-67, His-139, Asp-210, and His-268. The active-site Proton acceptor is the Asp-66.

Belongs to the RNase Z family. As to quaternary structure, homodimer. Requires Zn(2+) as cofactor.

The catalysed reaction is Endonucleolytic cleavage of RNA, removing extra 3' nucleotides from tRNA precursor, generating 3' termini of tRNAs. A 3'-hydroxy group is left at the tRNA terminus and a 5'-phosphoryl group is left at the trailer molecule.. Zinc phosphodiesterase, which displays some tRNA 3'-processing endonuclease activity. Probably involved in tRNA maturation, by removing a 3'-trailer from precursor tRNA. This Cyanothece sp. (strain PCC 7425 / ATCC 29141) protein is Ribonuclease Z.